The sequence spans 229 residues: 2-C-methyl-D-erythritol 4-phosphate cytidylyltransferase (229 aa).

It belongs to the IspD/TarI cytidylyltransferase family. IspD subfamily.

It carries out the reaction 2-C-methyl-D-erythritol 4-phosphate + CTP + H(+) = 4-CDP-2-C-methyl-D-erythritol + diphosphate. It functions in the pathway isoprenoid biosynthesis; isopentenyl diphosphate biosynthesis via DXP pathway; isopentenyl diphosphate from 1-deoxy-D-xylulose 5-phosphate: step 2/6. Its function is as follows. Catalyzes the formation of 4-diphosphocytidyl-2-C-methyl-D-erythritol from CTP and 2-C-methyl-D-erythritol 4-phosphate (MEP). This chain is 2-C-methyl-D-erythritol 4-phosphate cytidylyltransferase, found in Bacillus pumilus (strain SAFR-032).